Here is a 705-residue protein sequence, read N- to C-terminus: Elongation factor G (705 aa).

The tr-type G domain occupies 8–290; the sequence is ERYRNFGIMA…GVVHLLPSPA (283 aa). Residues 17-24, 88-92, and 142-145 each bind GTP; these read AHIDAGKT, DTPGH, and NKMD. Positions 290–309 are disordered; it reads ADRPPVQGIDENEKEDTRDA.

It belongs to the TRAFAC class translation factor GTPase superfamily. Classic translation factor GTPase family. EF-G/EF-2 subfamily.

The protein localises to the cytoplasm. Catalyzes the GTP-dependent ribosomal translocation step during translation elongation. During this step, the ribosome changes from the pre-translocational (PRE) to the post-translocational (POST) state as the newly formed A-site-bound peptidyl-tRNA and P-site-bound deacylated tRNA move to the P and E sites, respectively. Catalyzes the coordinated movement of the two tRNA molecules, the mRNA and conformational changes in the ribosome. This chain is Elongation factor G, found in Xanthomonas campestris pv. campestris (strain 8004).